A 465-amino-acid chain; its full sequence is ATP-dependent protease ATPase subunit HslU (465 aa).

ATP is bound by residues Val-19, 61–66, Asp-277, Glu-343, and Arg-415; that span reads GVGKTE.

The protein belongs to the ClpX chaperone family. HslU subfamily. In terms of assembly, a double ring-shaped homohexamer of HslV is capped on each side by a ring-shaped HslU homohexamer. The assembly of the HslU/HslV complex is dependent on binding of ATP.

The protein resides in the cytoplasm. In terms of biological role, ATPase subunit of a proteasome-like degradation complex; this subunit has chaperone activity. The binding of ATP and its subsequent hydrolysis by HslU are essential for unfolding of protein substrates subsequently hydrolyzed by HslV. HslU recognizes the N-terminal part of its protein substrates and unfolds these before they are guided to HslV for hydrolysis. The chain is ATP-dependent protease ATPase subunit HslU from Geobacillus sp. (strain WCH70).